The following is a 379-amino-acid chain: MAGNSFGTLFRFTTFGESHGPAIGCIVDGVPPRLPLDEAFIQGFLDRRRPGQSRFVTQRQEPDAVRILSGVFEGLTTGTPVMLEIVNQDQRSRDYGEIRDRFRPGHADWTYQAKYGIRDHRGGGRSSARETASRVAAGAVARRVLETAPAPVTVRGALVQVGPHRVDRARWDWAEVERNPFFCPDAGTAALWADYLDGVRKAGSSIGAVVEVVASGVPAGWGEPIYDKLDGDLARAMMTINAVKGVEIGAGFAAAELSGEENADEMRAGPDGQPLFLSNRAGGILGGISTGQDIVVRFAVKPTSSILTPRRTIDTAGHETEIVTKGRHDPCVGIRAVPVGEAMMACVLADHFLRHRALVGAPGPVGNGGPVEDGDPVGG.

2 residues coordinate NADP(+): Arg-48 and Arg-54. Residues 125–127 (RSS), 241–242 (NA), Gly-286, 301–305 (KPTSS), and Arg-327 contribute to the FMN site.

This sequence belongs to the chorismate synthase family. Homotetramer. The cofactor is FMNH2.

It catalyses the reaction 5-O-(1-carboxyvinyl)-3-phosphoshikimate = chorismate + phosphate. It functions in the pathway metabolic intermediate biosynthesis; chorismate biosynthesis; chorismate from D-erythrose 4-phosphate and phosphoenolpyruvate: step 7/7. Its function is as follows. Catalyzes the anti-1,4-elimination of the C-3 phosphate and the C-6 proR hydrogen from 5-enolpyruvylshikimate-3-phosphate (EPSP) to yield chorismate, which is the branch point compound that serves as the starting substrate for the three terminal pathways of aromatic amino acid biosynthesis. This reaction introduces a second double bond into the aromatic ring system. The protein is Chorismate synthase of Rhodospirillum centenum (strain ATCC 51521 / SW).